The sequence spans 448 residues: Probable glycine dehydrogenase (decarboxylating) subunit 1 (448 aa).

It belongs to the GcvP family. N-terminal subunit subfamily. In terms of assembly, the glycine cleavage system is composed of four proteins: P, T, L and H. In this organism, the P 'protein' is a heterodimer of two subunits.

It catalyses the reaction N(6)-[(R)-lipoyl]-L-lysyl-[glycine-cleavage complex H protein] + glycine + H(+) = N(6)-[(R)-S(8)-aminomethyldihydrolipoyl]-L-lysyl-[glycine-cleavage complex H protein] + CO2. Its function is as follows. The glycine cleavage system catalyzes the degradation of glycine. The P protein binds the alpha-amino group of glycine through its pyridoxal phosphate cofactor; CO(2) is released and the remaining methylamine moiety is then transferred to the lipoamide cofactor of the H protein. In Pyrococcus furiosus (strain ATCC 43587 / DSM 3638 / JCM 8422 / Vc1), this protein is Probable glycine dehydrogenase (decarboxylating) subunit 1.